Reading from the N-terminus, the 893-residue chain is MKFLVLLFNILCLFPILGADELVMSPIPTTDVQPKVTFDINSEVSSGPLYLNPVEMAGVKYLQLQRQPGVQVHKVVEGDIVIWENEEMPLYTCAIVTQNEVPYMAYVELLEDPDLIFFLKEGDQWAPIPEDQYLARLQQLRQQIHTESFFSLNLSFQHENYKYEMVSSFQHSIKMVVFTPKNGHICKMVYDKNIRIFKALYNEYVTSVIGFFRGLKLLLLNIFVIDDRGMIGNKYFQLLDDKYAPISVQGYVATIPKLKDFAEPYHPIILDISDIDYVNFYLGDATYHDPGFKIVPKTPQCITKVVDGNEVIYESSNPSVECVYKVTYYDKKNESMLRLDLNHSPPSYTSYYAKREGVWVTSTYIDLEEKIEELQDHRSTELDVMFMSDKDLNVVPLTNGNLEYFMVTPKPHRDIIIVFDGSEVLWYYEGLENHLVCTWIYVTEGAPRLVHLRVKDRIPQNTDIYMVKFGEYWVRISKTQYTQEIKKLIKKSKKKLPSIEEEDSDKHGGPPKGPEPPTGPGHSSSESKEHEDSKESKEPKEHGSPKETKEGEVTKKPGPAKEHKPSKIPVYTKRPEFPKKSKSPKRPESPKSPKRPVSPQRPVSPKSPKRPESLDIPKSPKRPESPKSPKRPVSPQRPVSPRRPESPKSPKSPKSPKSPKVPFDPKFKEKLYDSYLDKAAKTKETVTLPPVLPTDESFTHTPIGEPTAEQPDDIEPIEESVFIKETGILTEEVKTEDIHSETGEPEEPKRPDSPTKHSPKPTGTHPSMPKKRRRSDGLALSTTDLESEAGRILRDPTGKIVTMKRSKSFDDLTTVREKEHMGAEIRKIVVDDDGTEADDEDTHPSKEKHLSTVRRRRPRPKKSSKSSKPRKPDSAFVPSIIFIFLVSLIVGIL.

Residues 1-19 (MKFLVLLFNILCLFPILGA) form the signal peptide. 3 disordered regions span residues 492–666 (SKKK…FDPK), 681–799 (KTKE…PTGK), and 818–873 (KEHM…RKPD). Composition is skewed to basic and acidic residues over residues 525 to 565 (SESK…EHKP) and 573 to 591 (KRPE…ESPK). Residues 595–606 (RPVSPQRPVSPK) show a composition bias toward low complexity. Basic and acidic residues-rich tracts occupy residues 731–755 (EEVK…DSPT), 788–797 (EAGRILRDPT), and 818–830 (KEHM…KIVV). Positions 831 to 841 (DDDGTEADDED) are enriched in acidic residues. The segment covering 851–869 (STVRRRRPRPKKSSKSSKP) has biased composition (basic residues). Aspartate 873 carries the GPI-anchor amidated aspartate lipid modification. A propeptide spans 874 to 893 (SAFVPSIIFIFLVSLIVGIL) (removed in mature form).

It localises to the cell membrane. This chain is 104 kDa microneme/rhoptry antigen, found in Theileria annulata.